The chain runs to 140 residues: MLKTISPLIPPTLLKVLAEMGHGDEIIFSDAHFPAHSLGPQVIRADGLSVSDLLRAIIPLFELDSYAPPLVMMAAVEGDTLDPSVEARYRDALSLEAPCPDIVRIDRYAFYERAQKAFAIVITGECAKYGNILLKKGVTP.

H22 acts as the Proton donor in catalysis. Residues D30, R107, and 129-131 (YGN) contribute to the substrate site.

It belongs to the RbsD / FucU family. FucU mutarotase subfamily. In terms of assembly, homodecamer.

The protein localises to the cytoplasm. It catalyses the reaction alpha-L-fucose = beta-L-fucose. Its pathway is carbohydrate metabolism; L-fucose metabolism. Functionally, involved in the anomeric conversion of L-fucose. The polypeptide is L-fucose mutarotase (Salmonella gallinarum (strain 287/91 / NCTC 13346)).